A 393-amino-acid polypeptide reads, in one-letter code: Protein TsgA (393 aa).

Transmembrane regions (helical) follow at residues W11–M31, F51–P71, F78–L98, A101–I121, L134–F154, W162–G182, I206–I226, A245–L265, I273–Q293, W298–G318, F332–V352, and L361–V381.

It belongs to the major facilitator superfamily. TsgA family.

It localises to the cell inner membrane. In Salmonella heidelberg (strain SL476), this protein is Protein TsgA.